The primary structure comprises 324 residues: DNA-directed RNA polymerase subunit alpha (324 aa).

An alpha N-terminal domain (alpha-NTD) region spans residues 1–228 (MIEFQKPTIR…EHFNLFTDLS (228 aa)). The interval 245–324 (RNKLLDMTIE…STPKEEEEEK (80 aa)) is alpha C-terminal domain (alpha-CTD).

This sequence belongs to the RNA polymerase alpha chain family. In terms of assembly, homodimer. The RNAP catalytic core consists of 2 alpha, 1 beta, 1 beta' and 1 omega subunit. When a sigma factor is associated with the core the holoenzyme is formed, which can initiate transcription.

The catalysed reaction is RNA(n) + a ribonucleoside 5'-triphosphate = RNA(n+1) + diphosphate. DNA-dependent RNA polymerase catalyzes the transcription of DNA into RNA using the four ribonucleoside triphosphates as substrates. In Caldicellulosiruptor bescii (strain ATCC BAA-1888 / DSM 6725 / KCTC 15123 / Z-1320) (Anaerocellum thermophilum), this protein is DNA-directed RNA polymerase subunit alpha.